Reading from the N-terminus, the 400-residue chain is CinA-like protein (400 aa).

The protein belongs to the CinA family.

The sequence is that of CinA-like protein from Sulfurihydrogenibium sp. (strain YO3AOP1).